The following is a 328-amino-acid chain: MLNEFPIFDYEDIQLIPNKCVIKSRAEADTSVTLGNHTFKLPVVPANMQTILDENVAEQLAKGGYFYIMHRFDEAGRIPFIKRMHDQGLIASISVGVKDYEYDFVRQLKTDAPEYITIDIAHGHADSVISMIQHIKKELPDTFVIAGNVGTPEAVRELENAGADATKVGIGPGKVCITKVKTGFGTGGWQLAALRWCAKAARKPIIADGGIRTHGDIAKSIRFGASMIMIGSLFAGHIESPGKTIEVDGEQFKEYYGSASQYQKGAYKNVEGKRILLPAKGHLQDTLTEMEQDLQSAISYAGGRQVADLKHVDYVIVKNSIWNGDASH.

Residue Cys-176 is the Thioimidate intermediate of the active site. 205-228 (IIADGGIRTHGDIAKSIRFGASMI) provides a ligand contact to NADP(+).

It belongs to the IMPDH/GMPR family. GuaC type 2 subfamily.

It catalyses the reaction IMP + NH4(+) + NADP(+) = GMP + NADPH + 2 H(+). Its function is as follows. Catalyzes the irreversible NADPH-dependent deamination of GMP to IMP. It functions in the conversion of nucleobase, nucleoside and nucleotide derivatives of G to A nucleotides, and in maintaining the intracellular balance of A and G nucleotides. This chain is GMP reductase, found in Streptococcus pneumoniae (strain Taiwan19F-14).